The sequence spans 1113 residues: StAR-related lipid transfer protein 13 (1113 aa).

Position 1 is an N-acetylmethionine (M1). The 68-residue stretch at 55–122 (QQEIEAKEAC…LNKCASMKLD (68 aa)) folds into the SAM domain. 2 disordered regions span residues 162–254 (LLPR…PTRA) and 307–346 (PNGD…VSTP). Polar residues predominate over residues 177–188 (MRNTTSSESVLT). 2 stretches are compositionally biased toward low complexity: residues 197–213 (SIHS…SQPG) and 326–344 (SGKS…SGVS). S411 bears the Phosphoserine mark. Positions 536 to 549 (FEGNSVSEGRTTPS) are enriched in polar residues. The segment at 536–580 (FEGNSVSEGRTTPSDVERDVTSLNESEPPGVRDRRDSGVGASLTR) is disordered. Residues 663–868 (VPLIVHVQRT…HMIMECDRLF (206 aa)) form the Rho-GAP domain. The 209-residue stretch at 899-1107 (LEESGATFHT…RNSFQPLIAE (209 aa)) folds into the START domain.

As to quaternary structure, homodimer. Interacts with TAX1BP1. As to expression, ubiquitously expressed. Underexpressed in hepatocellular carcinoma cells and some breast cancer cell lines.

It is found in the cytoplasm. It localises to the membrane. Its subcellular location is the mitochondrion membrane. The protein localises to the lipid droplet. GTPase-activating protein for RhoA, and perhaps for Cdc42. May be involved in regulation of cytoskeletal reorganization, cell proliferation and cell motility. Acts a tumor suppressor in hepatocellular carcinoma cells. This Homo sapiens (Human) protein is StAR-related lipid transfer protein 13 (STARD13).